A 192-amino-acid chain; its full sequence is Phosphomevalonate kinase (192 aa).

ATP contacts are provided by residues 17–23 (KRKSGKD) and R141. Residue N170 coordinates substrate. H171 and Q180 together coordinate ATP.

In terms of assembly, monomer.

The protein resides in the cytoplasm. It is found in the cytosol. It carries out the reaction (R)-5-phosphomevalonate + ATP = (R)-5-diphosphomevalonate + ADP. The protein operates within isoprenoid biosynthesis; isopentenyl diphosphate biosynthesis via mevalonate pathway; isopentenyl diphosphate from (R)-mevalonate: step 2/3. Functionally, catalyzes the reversible ATP-dependent phosphorylation of mevalonate 5-phosphate to produce mevalonate diphosphate and ADP, a key step in the mevalonic acid mediated biosynthesis of isopentenyl diphosphate and other polyisoprenoid metabolites. This chain is Phosphomevalonate kinase (Pmvk), found in Mus musculus (Mouse).